We begin with the raw amino-acid sequence, 541 residues long: Chaperonin GroEL (541 aa).

Residues 29-32 (TLGP), 86-90 (DGTTT), Gly413, 477-479 (DAL), and Asp493 each bind ATP.

The protein belongs to the chaperonin (HSP60) family. As to quaternary structure, forms a cylinder of 14 subunits composed of two heptameric rings stacked back-to-back. Interacts with the co-chaperonin GroES.

Its subcellular location is the cytoplasm. The enzyme catalyses ATP + H2O + a folded polypeptide = ADP + phosphate + an unfolded polypeptide.. Functionally, together with its co-chaperonin GroES, plays an essential role in assisting protein folding. The GroEL-GroES system forms a nano-cage that allows encapsulation of the non-native substrate proteins and provides a physical environment optimized to promote and accelerate protein folding. This Clostridium botulinum (strain ATCC 19397 / Type A) protein is Chaperonin GroEL.